The sequence spans 850 residues: Mitochondrial escape protein 2 (850 aa).

A mitochondrion-targeting transit peptide spans 1–44 (MLLVRTTSLNVSRMPVPCLARGIGILKGKYRLANLMNAQPSVRH). Positions 44-66 (HVSSEIQQKDQQAGESNTATDTG) are disordered. Residues 45 to 287 (VSSEIQQKDQ…VSNFFTNHTR (243 aa)) lie on the Mitochondrial matrix side of the membrane. The span at 47–64 (SEIQQKDQQAGESNTATD) shows a compositional bias: polar residues. The 75-residue stretch at 198-272 (TTIVIKFQGP…TVLHIQYENI (75 aa)) folds into the RRM domain. The helical transmembrane segment at 288–308 (IAIPVLFALLSIFAVLVFDPI) threads the bilayer. The Mitochondrial intermembrane segment spans residues 309–850 (REFSIEQKIT…CEEEIKNLSK (542 aa)). Positions 607–621 (KGENVKEPESEKETA) are enriched in basic and acidic residues. The segment at 607–633 (KGENVKEPESEKETAENNDSDSEADTS) is disordered.

Belongs to the YME2 family.

The protein localises to the mitochondrion inner membrane. In terms of biological role, plays a role in maintaining the mitochondrial genome and in controlling the mtDNA escape. Involved in the regulation of mtDNA nucleotide structure and number. May have a dispensable role in early maturation of pre-rRNA. This chain is Mitochondrial escape protein 2 (YME2), found in Saccharomyces cerevisiae (strain ATCC 204508 / S288c) (Baker's yeast).